The primary structure comprises 70 residues: UPF0270 protein VIBHAR_00073 (70 aa).

It belongs to the UPF0270 family.

In Vibrio campbellii (strain ATCC BAA-1116), this protein is UPF0270 protein VIBHAR_00073.